We begin with the raw amino-acid sequence, 693 residues long: Translation initiation factor IF-2 (693 aa).

One can recognise a tr-type G domain in the interval 181–349 (PRPPVVTVMG…MILLVAEMNE (169 aa)). The interval 190-197 (GHVDHGKT) is G1. GTP is bound at residue 190 to 197 (GHVDHGKT). Residues 215 to 219 (GITQS) form a G2 region. Positions 236–239 (DTPG) are G3. GTP-binding positions include 236–240 (DTPGH) and 290–293 (NKID). A G4 region spans residues 290–293 (NKID). Residues 327 to 329 (SAR) are G5.

It belongs to the TRAFAC class translation factor GTPase superfamily. Classic translation factor GTPase family. IF-2 subfamily.

The protein resides in the cytoplasm. Functionally, one of the essential components for the initiation of protein synthesis. Protects formylmethionyl-tRNA from spontaneous hydrolysis and promotes its binding to the 30S ribosomal subunits. Also involved in the hydrolysis of GTP during the formation of the 70S ribosomal complex. In Thermotoga petrophila (strain ATCC BAA-488 / DSM 13995 / JCM 10881 / RKU-1), this protein is Translation initiation factor IF-2.